A 134-amino-acid chain; its full sequence is Small ribosomal subunit protein uS8c (134 aa).

Belongs to the universal ribosomal protein uS8 family. Part of the 30S ribosomal subunit.

The protein resides in the plastid. The protein localises to the chloroplast. One of the primary rRNA binding proteins, it binds directly to 16S rRNA central domain where it helps coordinate assembly of the platform of the 30S subunit. This Daucus carota (Wild carrot) protein is Small ribosomal subunit protein uS8c (rps8).